The sequence spans 665 residues: Protein LOW PHOTOSYNTHETIC EFFICIENCY 1, chloroplastic (665 aa).

The transit peptide at 1–68 directs the protein to the chloroplast; that stretch reads MQALSILPLK…VSSNRKVLFL (68 aa). 13 PPR repeats span residues 145-179, 181-217, 218-252, 253-283, 309-344, 345-375, 380-414, 422-456, 457-491, 492-526, 527-561, 562-596, and 597-631; these read PLQV…KSES, GVIG…GIVP, NIVT…GFEP, NPIT…LREK, GRIC…GVRP, SREE…IRER, SLSV…GPEP, VVSH…GLKP, QRRH…GEKP, TVIS…GIEP, NLYA…GIEP, SVVT…NVEP, and NEIT…GLKL.

It belongs to the PPR family. P subfamily. In terms of assembly, interacts with HCF173.

It is found in the plastid. The protein localises to the chloroplast thylakoid membrane. The protein resides in the chloroplast stroma. Functionally, required for light-regulated photosystem II (PSII) biogenesis and grana thylakoids formation by binding to the 5' UTR of PSII subunit mRNAs (e.g. psbJ, psbN and psbA) in a light-dependent manner through a redox-based mechanism, and facilitating the association of HCF173 with target mRNAs, which encodes PSII reaction center proteins (e.g. J, N and D1), thus regulating its expression by modulating ribosome loading. The sequence is that of Protein LOW PHOTOSYNTHETIC EFFICIENCY 1, chloroplastic from Arabidopsis thaliana (Mouse-ear cress).